Here is a 266-residue protein sequence, read N- to C-terminus: Ribonuclease HII (266 aa).

The region spanning 73-266 is the RNase H type-2 domain; that stretch reads SPVAGVDEAG…NCGSRQKCEG (194 aa). Residues aspartate 79, glutamate 80, and aspartate 173 each contribute to the a divalent metal cation site.

It belongs to the RNase HII family. The cofactor is Mn(2+). Mg(2+) is required as a cofactor.

The protein resides in the cytoplasm. It catalyses the reaction Endonucleolytic cleavage to 5'-phosphomonoester.. In terms of biological role, endonuclease that specifically degrades the RNA of RNA-DNA hybrids. The sequence is that of Ribonuclease HII from Pelotomaculum thermopropionicum (strain DSM 13744 / JCM 10971 / SI).